The primary structure comprises 402 residues: Beta sliding clamp (402 aa).

This sequence belongs to the beta sliding clamp family. Forms a ring-shaped head-to-tail homodimer around DNA which binds and tethers DNA polymerases and other proteins to the DNA. The DNA replisome complex has a single clamp-loading complex (3 tau and 1 each of delta, delta', psi and chi subunits) which binds 3 Pol III cores (1 core on the leading strand and 2 on the lagging strand) each with a beta sliding clamp dimer. Additional proteins in the replisome are other copies of gamma, psi and chi, Ssb, DNA helicase and RNA primase.

It localises to the cytoplasm. In terms of biological role, confers DNA tethering and processivity to DNA polymerases and other proteins. Acts as a clamp, forming a ring around DNA (a reaction catalyzed by the clamp-loading complex) which diffuses in an ATP-independent manner freely and bidirectionally along dsDNA. Initially characterized for its ability to contact the catalytic subunit of DNA polymerase III (Pol III), a complex, multichain enzyme responsible for most of the replicative synthesis in bacteria; Pol III exhibits 3'-5' exonuclease proofreading activity. The beta chain is required for initiation of replication as well as for processivity of DNA replication. This is Beta sliding clamp (dnaN) from Mycobacterium tuberculosis (strain CDC 1551 / Oshkosh).